Reading from the N-terminus, the 300-residue chain is Sulfate adenylyltransferase subunit 2 (300 aa).

The segment at 281 to 300 is disordered; it reads RAIDRDEAGSMEKKKREGYF.

This sequence belongs to the PAPS reductase family. CysD subfamily. In terms of assembly, heterodimer composed of CysD, the smaller subunit, and CysN.

It catalyses the reaction sulfate + ATP + H(+) = adenosine 5'-phosphosulfate + diphosphate. It functions in the pathway sulfur metabolism; hydrogen sulfide biosynthesis; sulfite from sulfate: step 1/3. In terms of biological role, with CysN forms the ATP sulfurylase (ATPS) that catalyzes the adenylation of sulfate producing adenosine 5'-phosphosulfate (APS) and diphosphate, the first enzymatic step in sulfur assimilation pathway. APS synthesis involves the formation of a high-energy phosphoric-sulfuric acid anhydride bond driven by GTP hydrolysis by CysN coupled to ATP hydrolysis by CysD. This chain is Sulfate adenylyltransferase subunit 2, found in Brucella melitensis biotype 2 (strain ATCC 23457).